An 85-amino-acid chain; its full sequence is Small ribosomal subunit protein uS17 (85 aa).

This sequence belongs to the universal ribosomal protein uS17 family. Part of the 30S ribosomal subunit.

Its function is as follows. One of the primary rRNA binding proteins, it binds specifically to the 5'-end of 16S ribosomal RNA. The protein is Small ribosomal subunit protein uS17 of Desulfosudis oleivorans (strain DSM 6200 / JCM 39069 / Hxd3) (Desulfococcus oleovorans).